The chain runs to 343 residues: 3-dehydroquinate synthase (343 aa).

Residues 86-90 (GALLD), 110-111 (TT), lysine 123, and lysine 132 contribute to the NAD(+) site. Glutamate 165, histidine 229, and histidine 243 together coordinate Zn(2+).

It belongs to the sugar phosphate cyclases superfamily. Dehydroquinate synthase family. Co(2+) serves as cofactor. It depends on Zn(2+) as a cofactor. Requires NAD(+) as cofactor.

It is found in the cytoplasm. The catalysed reaction is 7-phospho-2-dehydro-3-deoxy-D-arabino-heptonate = 3-dehydroquinate + phosphate. Its pathway is metabolic intermediate biosynthesis; chorismate biosynthesis; chorismate from D-erythrose 4-phosphate and phosphoenolpyruvate: step 2/7. Functionally, catalyzes the conversion of 3-deoxy-D-arabino-heptulosonate 7-phosphate (DAHP) to dehydroquinate (DHQ). The polypeptide is 3-dehydroquinate synthase (Pyrobaculum neutrophilum (strain DSM 2338 / JCM 9278 / NBRC 100436 / V24Sta) (Thermoproteus neutrophilus)).